Here is a 95-residue protein sequence, read N- to C-terminus: Phosphoribosyl-ATP pyrophosphatase (95 aa).

This sequence belongs to the PRA-PH family.

It localises to the cytoplasm. The catalysed reaction is 1-(5-phospho-beta-D-ribosyl)-ATP + H2O = 1-(5-phospho-beta-D-ribosyl)-5'-AMP + diphosphate + H(+). It functions in the pathway amino-acid biosynthesis; L-histidine biosynthesis; L-histidine from 5-phospho-alpha-D-ribose 1-diphosphate: step 2/9. The sequence is that of Phosphoribosyl-ATP pyrophosphatase from Halobacterium salinarum (strain ATCC 29341 / DSM 671 / R1).